The following is a 120-amino-acid chain: Large ribosomal subunit protein bL17 (120 aa).

This sequence belongs to the bacterial ribosomal protein bL17 family. In terms of assembly, part of the 50S ribosomal subunit. Contacts protein L32.

The polypeptide is Large ribosomal subunit protein bL17 (Mycoplasmopsis synoviae (strain 53) (Mycoplasma synoviae)).